The sequence spans 171 residues: Cytochrome c-type biogenesis protein CcmE (171 aa).

The Cytoplasmic portion of the chain corresponds to 1–7 (MNRKQKR). The chain crosses the membrane as a helical; Signal-anchor for type II membrane protein span at residues 8 to 28 (LAVIAGGMGFIAAAVLLVMFA). Over 29 to 171 (FSQSVAYFYM…NPGEEAKATQ (143 aa)) the chain is Periplasmic. Residues His124 and Tyr128 each coordinate heme. Positions 132–171 (DVADRLKQQGLWKEGQGGQESPGKEGQGQENPGEEAKATQ) are disordered.

This sequence belongs to the CcmE/CycJ family.

It localises to the cell inner membrane. Its function is as follows. Heme chaperone required for the biogenesis of c-type cytochromes. Transiently binds heme delivered by CcmC and transfers the heme to apo-cytochromes in a process facilitated by CcmF and CcmH. This is Cytochrome c-type biogenesis protein CcmE from Rhizobium leguminosarum bv. trifolii (strain WSM2304).